The chain runs to 217 residues: Probable transaldolase (217 aa).

K83 serves as the catalytic Schiff-base intermediate with substrate.

It belongs to the transaldolase family. Type 3B subfamily.

It localises to the cytoplasm. It catalyses the reaction D-sedoheptulose 7-phosphate + D-glyceraldehyde 3-phosphate = D-erythrose 4-phosphate + beta-D-fructose 6-phosphate. The protein operates within carbohydrate degradation; pentose phosphate pathway; D-glyceraldehyde 3-phosphate and beta-D-fructose 6-phosphate from D-ribose 5-phosphate and D-xylulose 5-phosphate (non-oxidative stage): step 2/3. In terms of biological role, transaldolase is important for the balance of metabolites in the pentose-phosphate pathway. This Maricaulis maris (strain MCS10) (Caulobacter maris) protein is Probable transaldolase.